A 420-amino-acid chain; its full sequence is Glutamyl-tRNA reductase (420 aa).

Substrate contacts are provided by residues 49 to 52 (TCNR), Ser109, 114 to 116 (EPQ), and Gln120. Residue Cys50 is the Nucleophile of the active site. 189–194 (GAGETI) is a binding site for NADP(+).

The protein belongs to the glutamyl-tRNA reductase family. As to quaternary structure, homodimer.

It catalyses the reaction (S)-4-amino-5-oxopentanoate + tRNA(Glu) + NADP(+) = L-glutamyl-tRNA(Glu) + NADPH + H(+). It functions in the pathway porphyrin-containing compound metabolism; protoporphyrin-IX biosynthesis; 5-aminolevulinate from L-glutamyl-tRNA(Glu): step 1/2. Functionally, catalyzes the NADPH-dependent reduction of glutamyl-tRNA(Glu) to glutamate 1-semialdehyde (GSA). The protein is Glutamyl-tRNA reductase of Serratia proteamaculans (strain 568).